Here is a 350-residue protein sequence, read N- to C-terminus: Methylthioribose-1-phosphate isomerase (350 aa).

The active-site Proton donor is Asp241.

Belongs to the eIF-2B alpha/beta/delta subunits family. MtnA subfamily.

It is found in the cytoplasm. The protein resides in the nucleus. It carries out the reaction 5-(methylsulfanyl)-alpha-D-ribose 1-phosphate = 5-(methylsulfanyl)-D-ribulose 1-phosphate. It functions in the pathway amino-acid biosynthesis; L-methionine biosynthesis via salvage pathway; L-methionine from S-methyl-5-thio-alpha-D-ribose 1-phosphate: step 1/6. Its function is as follows. Catalyzes the interconversion of methylthioribose-1-phosphate (MTR-1-P) into methylthioribulose-1-phosphate (MTRu-1-P). In Nematostella vectensis (Starlet sea anemone), this protein is Methylthioribose-1-phosphate isomerase.